The chain runs to 302 residues: Large ribosomal subunit protein uL29m (302 aa).

The protein belongs to the universal ribosomal protein uL29 family. In terms of assembly, component of the mitochondrial large ribosomal subunit. Mature mitochondrial ribosomes consist of a small (37S) and a large (54S) subunit. The 37S subunit contains at least 33 different proteins and 1 molecule of RNA (15S). The 54S subunit contains at least 45 different proteins and 1 molecule of RNA (21S).

It localises to the mitochondrion. The protein is Large ribosomal subunit protein uL29m (MRPL4) of Debaryomyces hansenii (strain ATCC 36239 / CBS 767 / BCRC 21394 / JCM 1990 / NBRC 0083 / IGC 2968) (Yeast).